The chain runs to 38 residues: Bacteriocin curvaticin FS47 (38 aa).

Its subcellular location is the secreted. In terms of biological role, bacteriocin active against Listeria monocytogenes, Pediococcus, Enterococcus, Lactobacilli and Bacilli. This chain is Bacteriocin curvaticin FS47, found in Latilactobacillus curvatus (Lactobacillus curvatus).